A 263-amino-acid chain; its full sequence is Leukocyte-associated immunoglobulin-like receptor 1 (263 aa).

The signal sequence occupies residues 1 to 21; the sequence is MPLHSVIVLVLVLCLGWKSNT. An Ig-like C2-type domain is found at 27–112; sequence SDFTICAEPG…VWSQRSNDLQ (86 aa). An intrachain disulfide couples Cys49 to Cys96. The N-linked (GlcNAc...) asparagine glycan is linked to Asn87. The helical transmembrane segment at 144–164 threads the bilayer; sequence ILTVVSVIFLLCLSLFLFCFL. Short sequence motifs (ITIM motif) lie at residues 225–230 and 255–260; these read VTYAQL and STYAAI. A phosphotyrosine mark is found at Tyr227 and Tyr257.

In terms of assembly, interacts with SH2 domains of tyrosine-protein phosphatases PTPN6 and PTPN11. The interaction with PTPN6 is constitutive. Interacts with the SH2 domain of CSK. Binds with high affinity to extracellular matrix collagens, the interaction is functionally important. Post-translationally, phosphorylation at Tyr-227 and Tyr-257 activates it. May be phosphorylated by LCK. N-glycosylated. In terms of tissue distribution, expressed in lymphoid and non-lymphoid organs.

The protein resides in the membrane. Functions as an inhibitory receptor that plays a constitutive negative regulatory role on cytolytic function of natural killer (NK) cells, B-cells and T-cells. Activation by Tyr phosphorylation results in recruitment and activation of the phosphatases PTPN6 and PTPN11. It also reduces the increase of intracellular calcium evoked by B-cell receptor ligation. May also play its inhibitory role independently of SH2-containing phosphatases. Modulates cytokine production in CD4+ T-cells, down-regulating IL2 and IFNG production while inducing secretion of transforming growth factor beta. Also down-regulates IgG and IgE production in B-cells as well as IL8, IL10 and TNF secretion. Inhibits proliferation and induces apoptosis in myeloid leukemia cell lines as well as prevents nuclear translocation of NF-kappa-B p65 subunit/RELA and phosphorylation of I-kappa-B alpha/CHUK in these cells. Inhibits the differentiation of peripheral blood precursors towards dendritic cells. The chain is Leukocyte-associated immunoglobulin-like receptor 1 (Lair1) from Rattus norvegicus (Rat).